The sequence spans 166 residues: Large ribosomal subunit protein uL10 (166 aa).

Belongs to the universal ribosomal protein uL10 family. Part of the ribosomal stalk of the 50S ribosomal subunit. The N-terminus interacts with L11 and the large rRNA to form the base of the stalk. The C-terminus forms an elongated spine to which L12 dimers bind in a sequential fashion forming a multimeric L10(L12)X complex.

Functionally, forms part of the ribosomal stalk, playing a central role in the interaction of the ribosome with GTP-bound translation factors. The polypeptide is Large ribosomal subunit protein uL10 (Mesoplasma florum (strain ATCC 33453 / NBRC 100688 / NCTC 11704 / L1) (Acholeplasma florum)).